The sequence spans 272 residues: MKMFDNIKNVGKLIRLERIFDKKSEKTVIIPMDHGVSSGPLEGIKDMRIATNAVADGGANAVLGHKGLVRHGHRGYGRDIGLIVHMSAGTSISPDPNKKVIVTTVEDALRMGADAVSLHVNVGAETDFEMYRDLGLISETCEYWGMPLIAMMYPRGPKIKDERDPEVVAHAARLGAELGADIIKTNYTGDIDSFKDVVKGCPAPIVIAGGPKTNTDEEFLQMVKDAMHAGSAGVASGRNVFQHKDVRGITSAICKIVHEDVEVKEALNEIKI.

Catalysis depends on aspartate 33, which acts as the Proton acceptor. 1-deoxy-D-threo-hexo-2,5-diulose 6-phosphate is bound by residues 33-37 and 153-155; these read DHGVS and YPR. Tyrosine 153 functions as the Proton donor in the catalytic mechanism. Catalysis depends on lysine 184, which acts as the Schiff-base intermediate with substrate. 1-deoxy-D-threo-hexo-2,5-diulose 6-phosphate-binding positions include 209–210 and 237–238; these read GG and GR.

Belongs to the DeoC/FbaB aldolase family. ADHS subfamily. Homodecamer.

It catalyses the reaction 1-deoxy-D-threo-hexo-2,5-diulose 6-phosphate + L-aspartate 4-semialdehyde = 2,3-dioxopropyl phosphate + 2-amino-2,3,7-trideoxy-D-lyxo-hept-6-ulosonate. Its function is as follows. Catalyzes a transaldol reaction between 6-deoxy-5-ketofructose 1-phosphate (DKFP) and L-aspartate semialdehyde (ASA) with an elimination of hydroxypyruvaldehyde phosphate to yield 2-amino-3,7-dideoxy-D-threo-hept-6-ulosonate (ADH). Plays a key role in an alternative pathway of the biosynthesis of 3-dehydroquinate (DHQ), which is involved in the canonical pathway for the biosynthesis of aromatic amino acids. This chain is 2-amino-3,7-dideoxy-D-threo-hept-6-ulosonate synthase, found in Methanococcus vannielii (strain ATCC 35089 / DSM 1224 / JCM 13029 / OCM 148 / SB).